Consider the following 489-residue polypeptide: Serine/threonine-protein kinase BSK2 (489 aa).

The segment at 1 to 30 is disordered; it reads MGCLHSKTANLPSSDDPSAPNKPESVNGDQ. A lipid anchor (N-myristoyl glycine) is attached at Gly2. Polar residues predominate over residues 7–16; that stretch reads KTANLPSSDD. Positions 56 to 322 constitute a Protein kinase domain; it reads SCIVSEGGEK…QEEVASHVLM (267 aa). ATP-binding positions include 62–70 and Lys84; that span reads GGEKAPNVV. Asp178 acts as the Proton acceptor in catalysis.

Belongs to the protein kinase superfamily. Ser/Thr protein kinase family. Phosphorylated by BRI1 upon brassinolide (BL) treatment.

The protein localises to the cell membrane. The enzyme catalyses L-seryl-[protein] + ATP = O-phospho-L-seryl-[protein] + ADP + H(+). The catalysed reaction is L-threonyl-[protein] + ATP = O-phospho-L-threonyl-[protein] + ADP + H(+). Probable serine/threonine kinase that acts as a positive regulator of brassinosteroid (BR) signaling downstream of the receptor kinase BRI1. Mediates signal transduction from BRI1 by functioning as substrate of BRI1. The chain is Serine/threonine-protein kinase BSK2 from Arabidopsis thaliana (Mouse-ear cress).